A 204-amino-acid chain; its full sequence is MFDPLSSSPDFLTFRTSLNLNQQNNSISSDDIVSKGFIGGNDLSTMMNTMSIDANNNNNNNNNNIDSNNINNINLNGISLCDNKNSIDNNYEETIIRTSNNNNNNSSSSSKANDIVITTTTTTTTTISMTSPTLSSDNRITLYTPPPSPPNGINYFNSSLSLSSNNSSQGVFISQHRMIAMHKISIGQKKKVYTYIYIFNLLFI.

This is an uncharacterized protein from Dictyostelium discoideum (Social amoeba).